Consider the following 240-residue polypeptide: MKVKKGGGGAGTATESAPGPSGQSVAPIPQPPAESESGSESEPDAGPGPRPGPLQRKQPIGPEDVLGLQRITGDYLCSPEENIYKIDFVRFKIRDMDSGTVLFEIKKPPVSERLPINRRDLDPNAGRFVRYQFTPAFLRLRQVGATVEFTVGDKPVNNFRMIERHYFRNQLLKSFDFHFGFCIPSSKNTCEHIYDFPPLSEELISEMIRHPYETQSDSFYFVDDRLVMHNKADYSYSGTP.

The span at 1-11 (MKVKKGGGGAG) shows a compositional bias: gly residues. A required for midbody localization region spans residues 1–59 (MKVKKGGGGAGTATESAPGPSGQSVAPIPQPPAESESGSESEPDAGPGPRPGPLQRKQP). Positions 1–61 (MKVKKGGGGA…GPLQRKQPIG (61 aa)) are disordered. Residues S37, S39, and S41 each carry the phosphoserine; by CK2 modification. Positions 121–240 (LDPNAGRFVR…KADYSYSGTP (120 aa)) are required for centrosome localization. Y131 lines the tetradecanoate pocket.

The protein belongs to the PDE6D/unc-119 family. Interacts with CABP4; in the absence of calcium. Interacts with DNM1; leading to a decrease of DNM1 GTPase activity. May interact with GTP-bound ARL1. Interacts with ARL2 and ARL3 (GTP-bound forms); this promotes the release of myyristoylated cargo proteins. Found in a complex with ARL3, RP2 and UNC119; RP2 induces hydrolysis of GTP ARL3 in the complex, leading to the release of UNC119. Interacts with NPHP3 (when myristoylated). Interacts with CYS1 (when myristoylated). Interacts with MACIR; interaction only takes place when UNC119 is not liganded with myristoylated proteins. Interacts with LCK; this interaction plays a crucial role in activation of LCK. Interacts with FYN. Interacts with RAB11A; in a cell cycle-dependent manner. Interacts with LYN (via SH2 and SH3 domains); leading to LYN activation. Found in a complex with ABL1, ABL2, CRK and UNC119; leading to the inhibition of CRK phosphorylation by ABL kinases. Interacts with CD44; leading to Shigella invasion. Interacts with KLHL18 (via kelch repeats). Interacts with PPP3CA, PPP3CB and PPP3CC. Interacts with USP48; this interaction promotes UNC119 stability. Post-translationally, phosphorylation suppresses its interaction with KLHL18 and down-regulates its KLHL18-mediated degradation. Phosphorylated more under light conditions than dark conditions. Dephosphorylated by calcineurin. In terms of tissue distribution, abundantly expressed in retina, in photoreceptor synapses and inner segments. Expressed in a much lesser extent in several other tissues.

It localises to the cytoplasm. It is found in the cytoskeleton. The protein resides in the microtubule organizing center. The protein localises to the centrosome. Its subcellular location is the spindle pole. It localises to the spindle. Functionally, involved in synaptic functions in photoreceptor cells, the signal transduction in immune cells as a Src family kinase activator, endosome recycling, the uptake of bacteria and endocytosis, protein trafficking in sensory neurons and as lipid-binding chaperone with specificity for a diverse subset of myristoylated proteins. Specifically binds the myristoyl moiety of a subset of N-terminally myristoylated proteins and is required for their localization. Binds myristoylated GNAT1 and is required for G-protein localization and trafficking in sensory neurons. Probably plays a role in trafficking proteins in photoreceptor cells. Plays important roles in mediating Src family kinase signals for the completion of cytokinesis via RAB11A. The chain is Protein unc-119 homolog A (UNC119) from Homo sapiens (Human).